The chain runs to 146 residues: Hemoglobin subunit beta (146 aa).

N-acetylvaline is present on Val1. The Globin domain occupies 2-146; it reads HLTPEEKTAV…VANALAHKYH (145 aa). The residue at position 12 (Thr12) is a Phosphothreonine. The residue at position 44 (Ser44) is a Phosphoserine. Lys59 carries the post-translational modification N6-acetyllysine. Heme b is bound at residue His63. Residue Lys82 is modified to N6-acetyllysine. A heme b-binding site is contributed by His92. Position 93 is an S-nitrosocysteine (Cys93). The residue at position 144 (Lys144) is an N6-acetyllysine.

It belongs to the globin family. In terms of assembly, heterotetramer of two alpha chains and two beta chains. Red blood cells.

Involved in oxygen transport from the lung to the various peripheral tissues. This chain is Hemoglobin subunit beta (HBB), found in Chlorocebus aethiops (Green monkey).